A 206-amino-acid chain; its full sequence is Putative 3-methyladenine DNA glycosylase (206 aa).

This sequence belongs to the DNA glycosylase MPG family.

This Staphylococcus carnosus (strain TM300) protein is Putative 3-methyladenine DNA glycosylase.